Consider the following 290-residue polypeptide: 4-diphosphocytidyl-2-C-methyl-D-erythritol kinase (290 aa).

Lysine 11 is an active-site residue. ATP is bound at residue 97–107; the sequence is PVAAGIGGGSS. Aspartate 139 is an active-site residue.

It belongs to the GHMP kinase family. IspE subfamily.

It carries out the reaction 4-CDP-2-C-methyl-D-erythritol + ATP = 4-CDP-2-C-methyl-D-erythritol 2-phosphate + ADP + H(+). It functions in the pathway isoprenoid biosynthesis; isopentenyl diphosphate biosynthesis via DXP pathway; isopentenyl diphosphate from 1-deoxy-D-xylulose 5-phosphate: step 3/6. Functionally, catalyzes the phosphorylation of the position 2 hydroxy group of 4-diphosphocytidyl-2C-methyl-D-erythritol. This is 4-diphosphocytidyl-2-C-methyl-D-erythritol kinase from Methylobacterium radiotolerans (strain ATCC 27329 / DSM 1819 / JCM 2831 / NBRC 15690 / NCIMB 10815 / 0-1).